The following is a 69-amino-acid chain: DNA-directed RNA polymerase subunit omega (69 aa).

This sequence belongs to the RNA polymerase subunit omega family. As to quaternary structure, the RNAP catalytic core consists of 2 alpha, 1 beta, 1 beta' and 1 omega subunit. When a sigma factor is associated with the core the holoenzyme is formed, which can initiate transcription.

It carries out the reaction RNA(n) + a ribonucleoside 5'-triphosphate = RNA(n+1) + diphosphate. In terms of biological role, promotes RNA polymerase assembly. Latches the N- and C-terminal regions of the beta' subunit thereby facilitating its interaction with the beta and alpha subunits. The protein is DNA-directed RNA polymerase subunit omega of Geotalea uraniireducens (strain Rf4) (Geobacter uraniireducens).